The sequence spans 323 residues: MIEFGDFYRLIAKGPLSPWLDTLPAQLSAWQRESLHGKFKTWFNAVEHLPQLTPTTLDLHSGVRAEMSPPISAGQREGMENMLRALMPWRKGPFSLYGLDIDTEWRSDWKWQRVLPHISPLAGRTILDVGCGSGYHLWRMIGEGAHLAVGIDPMQLFLCQFEAIRKLLGGDQRAHVLPLGIEQLPELAAFDTVFSMGVLYHRRSPLDHLYQLKNQLVTDGELVLETLVVEGDSQQVLVPGDRYAQMRNVYFIPSAPALKAWLEKCGFVDVRIADMAVTTTEEQRRTDWMTSESLAEFLDPHDHSKTVEGYPAPLRAVLIARKP.

Carboxy-S-adenosyl-L-methionine contacts are provided by residues Lys-91, Trp-105, Lys-110, Gly-130, 181–182 (IE), Met-196, Tyr-200, and Arg-315.

It belongs to the class I-like SAM-binding methyltransferase superfamily. CmoB family. Homotetramer.

It carries out the reaction carboxy-S-adenosyl-L-methionine + 5-hydroxyuridine(34) in tRNA = 5-carboxymethoxyuridine(34) in tRNA + S-adenosyl-L-homocysteine + H(+). In terms of biological role, catalyzes carboxymethyl transfer from carboxy-S-adenosyl-L-methionine (Cx-SAM) to 5-hydroxyuridine (ho5U) to form 5-carboxymethoxyuridine (cmo5U) at position 34 in tRNAs. The polypeptide is tRNA U34 carboxymethyltransferase (Yersinia pestis bv. Antiqua (strain Antiqua)).